The chain runs to 193 residues: Non-specific lipid transfer protein GPI-anchored 1 (193 aa).

A signal peptide spans Met-1–Ala-22. 4 cysteine pairs are disulfide-bonded: Cys-35-Cys-76, Cys-45-Cys-60, Cys-61-Cys-106, and Cys-74-Cys-116. Residues Asn-110 and Asn-135 are each glycosylated (N-linked (GlcNAc...) asparagine). Residues Thr-138–Ala-161 are disordered. A lipid anchor (GPI-anchor amidated aspartate) is attached at Asp-165. Positions Gly-166–Met-193 are cleaved as a propeptide — removed in mature form.

It belongs to the plant LTP family. Post-translationally, O-glycosylated on hydroxyprolines; noncontiguous hydroxylproline residues are glycosylated with arabinogalactan. As to expression, up-regulated in the epidermis of stems and leaves. Expressed in the epidermis, stem cortex, vascular bundles and mesophyll cells in root tips, cotyledons, seedlings, leaves, caulines, flowers, siliques, pollen, and early-developing seeds.

The protein resides in the cell membrane. It is found in the secreted. It localises to the cell wall. The protein localises to the endoplasmic reticulum. Its subcellular location is the golgi apparatus. Functionally, lipid transfer protein that, together with LTPG2, binds to lipids and functions as a component of the cuticular lipid export machinery that performs extensive export of intracellular lipids (e.g. C29 alkane) from epidermal cells to the surface to build the cuticular wax layer and silique walls. Involved in the establishment of resistance to the necrotrophic fungal pathogen Alternaria brassicicola. Contributes to pre-invasive defense against some non-host powdery mildew pathogens by preventing the penetration of the epidermal cell wall by the fungal agents (e.g. Blumeria graminis f. sp. hordei (Bgh)). Maybe involved in seed and ovule maturation and development, probably by regulating the fatty acids homeostasis during suberin and sporopollenin biosynthesis or deposition. In Arabidopsis thaliana (Mouse-ear cress), this protein is Non-specific lipid transfer protein GPI-anchored 1.